The following is a 337-amino-acid chain: Annexin E1 (337 aa).

4 Annexin repeats span residues 10 to 80, 81 to 154, 161 to 238, and 242 to 312; these read TGVT…MLYK, PRAQ…AVAT, DTHE…LAHD, and DPCC…LLWE.

This sequence belongs to the annexin family.

The protein localises to the cell projection. It is found in the cilium. Its subcellular location is the flagellum. May function as a calcium-regulated structural element linking phospholipid bilayer and underlying axoneme. The polypeptide is Annexin E1 (ANXE1) (Giardia intestinalis (Giardia lamblia)).